Here is a 92-residue protein sequence, read N- to C-terminus: Putative membrane protein insertion efficiency factor (92 aa).

This sequence belongs to the UPF0161 family.

Its subcellular location is the cell inner membrane. Could be involved in insertion of integral membrane proteins into the membrane. This Synechococcus sp. (strain CC9902) protein is Putative membrane protein insertion efficiency factor.